A 182-amino-acid polypeptide reads, in one-letter code: Cytidylate kinase (182 aa).

An ATP-binding site is contributed by 7 to 15 (GLPGSGTTS).

The protein belongs to the cytidylate kinase family. Type 2 subfamily.

Its subcellular location is the cytoplasm. It carries out the reaction CMP + ATP = CDP + ADP. The catalysed reaction is dCMP + ATP = dCDP + ADP. In Methanoregula boonei (strain DSM 21154 / JCM 14090 / 6A8), this protein is Cytidylate kinase.